The sequence spans 200 residues: LHFPL tetraspan subfamily member 6 protein (200 aa).

The N-terminal stretch at 1–23 (MASSLTCTGVIWALLSFLSAATS) is a signal peptide. A run of 3 helical transmembrane segments spans residues 84–104 (ICTI…LTAL), 123–143 (GIQF…PLGW), and 166–186 (IGWA…LCTW).

It belongs to the LHFP family.

Its subcellular location is the membrane. This chain is LHFPL tetraspan subfamily member 6 protein, found in Mus musculus (Mouse).